The primary structure comprises 245 residues: tRNA1(Val) (adenine(37)-N6)-methyltransferase (245 aa).

This sequence belongs to the methyltransferase superfamily. tRNA (adenine-N(6)-)-methyltransferase family.

Its subcellular location is the cytoplasm. The enzyme catalyses adenosine(37) in tRNA1(Val) + S-adenosyl-L-methionine = N(6)-methyladenosine(37) in tRNA1(Val) + S-adenosyl-L-homocysteine + H(+). Functionally, specifically methylates the adenine in position 37 of tRNA(1)(Val) (anticodon cmo5UAC). In Escherichia coli (strain SE11), this protein is tRNA1(Val) (adenine(37)-N6)-methyltransferase.